Reading from the N-terminus, the 324-residue chain is Beta-ketoacyl-[acyl-carrier-protein] synthase III (324 aa).

Catalysis depends on residues Cys114 and His251. An ACP-binding region spans residues 252–256 (QANQR). The active site involves Asn281.

The protein belongs to the thiolase-like superfamily. FabH family. In terms of assembly, homodimer.

It is found in the cytoplasm. The catalysed reaction is malonyl-[ACP] + acetyl-CoA + H(+) = 3-oxobutanoyl-[ACP] + CO2 + CoA. It functions in the pathway lipid metabolism; fatty acid biosynthesis. Its function is as follows. Catalyzes the condensation reaction of fatty acid synthesis by the addition to an acyl acceptor of two carbons from malonyl-ACP. Catalyzes the first condensation reaction which initiates fatty acid synthesis and may therefore play a role in governing the total rate of fatty acid production. Possesses both acetoacetyl-ACP synthase and acetyl transacylase activities. Its substrate specificity determines the biosynthesis of branched-chain and/or straight-chain of fatty acids. This Rhodospirillum rubrum (strain ATCC 11170 / ATH 1.1.1 / DSM 467 / LMG 4362 / NCIMB 8255 / S1) protein is Beta-ketoacyl-[acyl-carrier-protein] synthase III.